Reading from the N-terminus, the 360-residue chain is Peptide chain release factor 1 (360 aa).

Gln-235 is modified (N5-methylglutamine). Positions 284–303 are disordered; the sequence is RERQSKEAAERKSLVGSGDR.

This sequence belongs to the prokaryotic/mitochondrial release factor family. In terms of processing, methylated by PrmC. Methylation increases the termination efficiency of RF1.

It localises to the cytoplasm. Functionally, peptide chain release factor 1 directs the termination of translation in response to the peptide chain termination codons UAG and UAA. This is Peptide chain release factor 1 from Bordetella avium (strain 197N).